The primary structure comprises 304 residues: tRNA (guanine(9)-N1)-methyltransferase (304 aa).

Composition is skewed to basic and acidic residues over residues 1–26 (MENK…KNET) and 42–72 (RQQE…KRKI). Residues 1–72 (MENKDALDIG…LRKEERKRKI (72 aa)) form a disordered region. Positions 81–276 (QKKRIRLGKV…EVIPKRKGIL (196 aa)) constitute an SAM-dependent MTase TRM10-type domain. S-adenosyl-L-methionine is bound by residues leucine 183, glycine 203, 207–211 (DKNRY), cysteine 215, leucine 229, and 241–243 (KIL). Aspartate 207 (proton acceptor) is an active-site residue. The disordered stretch occupies residues 282–304 (SFDVSEDTRSQSNQSDSELEKEN). Serine 296 carries the post-translational modification Phosphoserine.

Belongs to the class IV-like SAM-binding methyltransferase superfamily. TRM10 family. Monomer.

The protein localises to the cytoplasm. Its subcellular location is the nucleus. The catalysed reaction is guanosine(9) in tRNA + S-adenosyl-L-methionine = N(1)-methylguanosine(9) in tRNA + S-adenosyl-L-homocysteine + H(+). In terms of biological role, S-adenosyl-L-methionine-dependent guanine N(1)-methyltransferase that catalyzes the formation of N(1)-methylguanine at position 9 (m1G9) in cytoplasmic tRNA. The chain is tRNA (guanine(9)-N1)-methyltransferase from Schizosaccharomyces pombe (strain 972 / ATCC 24843) (Fission yeast).